The following is an 81-amino-acid chain: Antimicrobial peptide Con22 (81 aa).

An N-terminal signal peptide occupies residues 1-22; it reads MNAKVMLVCLLVTMLVMEPAEA. Positions 66 to 81 are excised as a propeptide; the sequence is EAGQIPFDEFMNVLYS.

Belongs to the non-disulfide-bridged peptide (NDBP) superfamily. Long chain multifunctional peptide (group 2) family. Expressed by the venom gland.

The protein localises to the secreted. The protein resides in the target cell membrane. Functionally, at high concentrations, acts as a pore former in cellular membranes and causes the leakage of the cells. At submicromolar concentrations, degranulates granulocytes and has a weak hemolytic activity against human erythrocytes. Also strongly inhibits the production of superoxide anions. Has a strong antibacterial activity against Gram-negative bacteria but is less active against Gram-positive bacteria. Also has antifungal activity. In Urodacus yaschenkoi (Inland robust scorpion), this protein is Antimicrobial peptide Con22.